The primary structure comprises 175 residues: ATP synthase subunit b (175 aa).

Residues 19–35 traverse the membrane as a helical segment; sequence GLIFWTTVTFLIVLFIL.

It belongs to the ATPase B chain family. As to quaternary structure, F-type ATPases have 2 components, F(1) - the catalytic core - and F(0) - the membrane proton channel. F(1) has five subunits: alpha(3), beta(3), gamma(1), delta(1), epsilon(1). F(0) has four main subunits: a(1), b(2) and c(10-14). The alpha and beta chains form an alternating ring which encloses part of the gamma chain. F(1) is attached to F(0) by a central stalk formed by the gamma and epsilon chains, while a peripheral stalk is formed by the delta and b chains.

The protein resides in the cell inner membrane. Its function is as follows. F(1)F(0) ATP synthase produces ATP from ADP in the presence of a proton or sodium gradient. F-type ATPases consist of two structural domains, F(1) containing the extramembraneous catalytic core and F(0) containing the membrane proton channel, linked together by a central stalk and a peripheral stalk. During catalysis, ATP synthesis in the catalytic domain of F(1) is coupled via a rotary mechanism of the central stalk subunits to proton translocation. Component of the F(0) channel, it forms part of the peripheral stalk, linking F(1) to F(0). This is ATP synthase subunit b from Chlorobium phaeobacteroides (strain BS1).